Consider the following 233-residue polypeptide: Probable 2-phosphosulfolactate phosphatase (233 aa).

This sequence belongs to the ComB family. It depends on Mg(2+) as a cofactor.

It carries out the reaction (2R)-O-phospho-3-sulfolactate + H2O = (2R)-3-sulfolactate + phosphate. This Symbiobacterium thermophilum (strain DSM 24528 / JCM 14929 / IAM 14863 / T) protein is Probable 2-phosphosulfolactate phosphatase.